The sequence spans 206 residues: Nucleoside triphosphate pyrophosphatase (206 aa).

Asp-71 acts as the Proton acceptor in catalysis.

This sequence belongs to the Maf family. A divalent metal cation is required as a cofactor.

It localises to the cytoplasm. The enzyme catalyses a ribonucleoside 5'-triphosphate + H2O = a ribonucleoside 5'-phosphate + diphosphate + H(+). The catalysed reaction is a 2'-deoxyribonucleoside 5'-triphosphate + H2O = a 2'-deoxyribonucleoside 5'-phosphate + diphosphate + H(+). Its function is as follows. Nucleoside triphosphate pyrophosphatase. May have a dual role in cell division arrest and in preventing the incorporation of modified nucleotides into cellular nucleic acids. The protein is Nucleoside triphosphate pyrophosphatase of Rippkaea orientalis (strain PCC 8801 / RF-1) (Cyanothece sp. (strain PCC 8801)).